The primary structure comprises 1526 residues: DNA topoisomerase 2-alpha (1526 aa).

N-acetylmethionine is present on Met-1. Residue Ser-4 is modified to Phosphoserine. Lys-17 participates in a covalent cross-link: Glycyl lysine isopeptide (Lys-Gly) (interchain with G-Cter in SUMO2). Residues Asn-90, Asn-118, and Ser-146–Asn-148 contribute to the ATP site. Glycyl lysine isopeptide (Lys-Gly) (interchain with G-Cter in SUMO2) cross-links involve residues Lys-154 and Lys-155. Gly-159–Lys-166 is a binding site for ATP. Thr-280 is subject to Phosphothreonine. An interaction with DNA region spans residues Lys-340–Lys-342. A Glycyl lysine isopeptide (Lys-Gly) (interchain with G-Cter in SUMO2) cross-link involves residue Lys-350. ATP is bound at residue Gln-374–Lys-376. Glycyl lysine isopeptide (Lys-Gly) (interchain with G-Cter in SUMO2) cross-links involve residues Lys-384, Lys-395, Lys-414, Lys-416, Lys-423, and Lys-438. The Toprim domain occupies Cys-453–Glu-570. A Mg(2+)-binding site is contributed by Glu-459. Glycyl lysine isopeptide (Lys-Gly) (interchain with G-Cter in SUMO2) cross-links involve residues Lys-464, Lys-478, and Lys-527. Mg(2+)-binding residues include Asp-539 and Asp-541. Residues Lys-582, Lys-597, Lys-612, Lys-620, Lys-623, Lys-630, Lys-637, Lys-653, Lys-660, and Lys-674 each participate in a glycyl lysine isopeptide (Lys-Gly) (interchain with G-Cter in SUMO2) cross-link. One can recognise a Topo IIA-type catalytic domain in the interval Ile-713–Leu-1168. The active-site O-(5'-phospho-DNA)-tyrosine intermediate is Tyr-803. Positions Lys-988–Ser-997 are interaction with DNA. Lys-1073 is covalently cross-linked (Glycyl lysine isopeptide (Lys-Gly) (interchain with G-Cter in SUMO2)). A compositionally biased stretch (basic and acidic residues) spans Ala-1087–Pro-1096. The tract at residues Ala-1087–Pro-1120 is disordered. Residues Glu-1097–Ser-1109 are compositionally biased toward acidic residues. Residues Lys-1193 and Lys-1201 each participate in a glycyl lysine isopeptide (Lys-Gly) (interchain with G-Cter in SUMO2) cross-link. Residue Ser-1210 is modified to Phosphoserine. A disordered region spans residues Glu-1229–Phe-1526. A Glycyl lysine isopeptide (Lys-Gly) (interchain with G-Cter in SUMO1); alternate cross-link involves residue Lys-1237. Lys-1237 is covalently cross-linked (Glycyl lysine isopeptide (Lys-Gly) (interchain with G-Cter in SUMO2); alternate). Thr-1244 carries the phosphothreonine modification. Residues Leu-1254–Thr-1268 show a composition bias toward basic and acidic residues. Glycyl lysine isopeptide (Lys-Gly) (interchain with G-Cter in SUMO2) cross-links involve residues Lys-1272, Lys-1279, and Lys-1282. A phosphoserine mark is found at Ser-1291, Ser-1293, Ser-1295, and Ser-1298. Thr-1323 is modified (phosphothreonine). Over residues Leu-1326–Pro-1346 the composition is skewed to acidic residues. Phosphoserine occurs at positions 1328 and 1333. Position 1350 is a phosphothreonine (Thr-1350). Glycyl lysine isopeptide (Lys-Gly) (interchain with G-Cter in SUMO2) cross-links involve residues Lys-1359, Lys-1363, and Lys-1369. Phosphoserine occurs at positions 1370 and 1373. Lys-1381 is covalently cross-linked (Glycyl lysine isopeptide (Lys-Gly) (interchain with G-Cter in SUMO2)). A phosphoserine mark is found at Ser-1383 and Ser-1387. A compositionally biased stretch (polar residues) spans Thr-1417–Gly-1427. Lys-1418 is covalently cross-linked (Glycyl lysine isopeptide (Lys-Gly) (interchain with G-Cter in SUMO2); alternate). Position 1418 is an N6-acetyllysine; alternate (Lys-1418). The tract at residues Lys-1429–Lys-1435 is interaction with PLSCR1. A Glycyl lysine isopeptide (Lys-Gly) (interchain with G-Cter in SUMO2); alternate cross-link involves residue Lys-1438. Lys-1438 is modified (N6-acetyllysine; alternate). Glycyl lysine isopeptide (Lys-Gly) (interchain with G-Cter in SUMO2) cross-links involve residues Lys-1450 and Lys-1455. Ser-1465, Ser-1467, Ser-1470, and Ser-1472 each carry phosphoserine. Glycyl lysine isopeptide (Lys-Gly) (interchain with G-Cter in SUMO2) cross-links involve residues Lys-1480 and Lys-1488. The span at Leu-1487 to Leu-1498 shows a compositional bias: basic and acidic residues. Phosphoserine is present on Ser-1521.

Belongs to the type II topoisomerase family. In terms of assembly, homodimer. Interacts with COPS5. Interacts with RECQL5; this stimulates DNA decatenation. Interacts with SETMAR; stimulates the topoisomerase activity. Interacts with DHX9; this interaction occurs in a E2 enzyme UBE2I- and RNA-dependent manner, negatively regulates DHX9-mediated double-stranded DNA and RNA duplex helicase activity and stimulates TOP2A-mediated supercoiled DNA relaxation activity. Interacts with HNRNPU (via C-terminus); this interaction protects the topoisomerase TOP2A from degradation and positively regulates the relaxation of supercoiled DNA in a RNA-dependent manner. Interacts with MCM3AP. Interacts with ERCC6. Interacts with PLSCR1. Interacts with GCNA; this interaction allows the resolution of topoisomerase II (TOP2A) DNA-protein cross-links. Interacts with POL1RA/RPA1 (via dock II) and UBTF in the context of Pol I complex; may assist Pol I transcription initiation by releasing supercoils occurring during DNA unwinding. Interacts with TPRN; TPRN interacts with a number of DNA damage response proteins, is recruited to sites of DNA damage and may play a role in DNA damage repair. Requires Mg(2+) as cofactor. Mn(2+) serves as cofactor. It depends on Ca(2+) as a cofactor. In terms of processing, phosphorylation has no effect on catalytic activity.

The protein localises to the cytoplasm. Its subcellular location is the nucleus. The protein resides in the nucleoplasm. It is found in the nucleolus. It catalyses the reaction ATP-dependent breakage, passage and rejoining of double-stranded DNA.. Key decatenating enzyme that alters DNA topology by binding to two double-stranded DNA molecules, generating a double-stranded break in one of the strands, passing the intact strand through the broken strand, and religating the broken strand. May play a role in regulating the period length of BMAL1 transcriptional oscillation. This Rattus norvegicus (Rat) protein is DNA topoisomerase 2-alpha (Top2a).